We begin with the raw amino-acid sequence, 242 residues long: Biosynthetic peptidoglycan transglycosylase (242 aa).

Residues 19-39 (LMVVLAIFWGGGIALFSVAPV) form a helical membrane-spanning segment.

It belongs to the glycosyltransferase 51 family.

The protein localises to the cell inner membrane. It catalyses the reaction [GlcNAc-(1-&gt;4)-Mur2Ac(oyl-L-Ala-gamma-D-Glu-L-Lys-D-Ala-D-Ala)](n)-di-trans,octa-cis-undecaprenyl diphosphate + beta-D-GlcNAc-(1-&gt;4)-Mur2Ac(oyl-L-Ala-gamma-D-Glu-L-Lys-D-Ala-D-Ala)-di-trans,octa-cis-undecaprenyl diphosphate = [GlcNAc-(1-&gt;4)-Mur2Ac(oyl-L-Ala-gamma-D-Glu-L-Lys-D-Ala-D-Ala)](n+1)-di-trans,octa-cis-undecaprenyl diphosphate + di-trans,octa-cis-undecaprenyl diphosphate + H(+). It participates in cell wall biogenesis; peptidoglycan biosynthesis. In terms of biological role, peptidoglycan polymerase that catalyzes glycan chain elongation from lipid-linked precursors. This chain is Biosynthetic peptidoglycan transglycosylase, found in Escherichia coli O45:K1 (strain S88 / ExPEC).